A 321-amino-acid polypeptide reads, in one-letter code: Tetraacyldisaccharide 4'-kinase (321 aa).

An ATP-binding site is contributed by 54 to 61 (SVGGTGKT).

The protein belongs to the LpxK family.

It catalyses the reaction a lipid A disaccharide + ATP = a lipid IVA + ADP + H(+). It participates in glycolipid biosynthesis; lipid IV(A) biosynthesis; lipid IV(A) from (3R)-3-hydroxytetradecanoyl-[acyl-carrier-protein] and UDP-N-acetyl-alpha-D-glucosamine: step 6/6. Its function is as follows. Transfers the gamma-phosphate of ATP to the 4'-position of a tetraacyldisaccharide 1-phosphate intermediate (termed DS-1-P) to form tetraacyldisaccharide 1,4'-bis-phosphate (lipid IVA). In Rickettsia conorii (strain ATCC VR-613 / Malish 7), this protein is Tetraacyldisaccharide 4'-kinase.